A 430-amino-acid chain; its full sequence is Bifunctional protein GlmU (430 aa).

Residues 1 to 223 form a pyrophosphorylase region; sequence MSFSVVILAA…KNEFQGVNSK (223 aa). UDP-N-acetyl-alpha-D-glucosamine contacts are provided by residues 8 to 11, Lys22, and 81 to 82; these read LAAG and GT. Residue Asp102 participates in Mg(2+) binding. Residues Gly135, Glu149, Asn164, and Asn221 each coordinate UDP-N-acetyl-alpha-D-glucosamine. Asn221 contributes to the Mg(2+) binding site. Residues 224-244 form a linker region; that stretch reads YDLANAEIVMQDRIKRHWMQQ. Residues 245–430 form an N-acetyltransferase region; that stretch reads GVIMRLPQTI…DFYYKFFGKN (186 aa). UDP-N-acetyl-alpha-D-glucosamine contacts are provided by Arg308 and Lys325. Residue His336 is the Proton acceptor of the active site. The UDP-N-acetyl-alpha-D-glucosamine site is built by Tyr339 and Asn350. Acetyl-CoA contacts are provided by residues Ala353, 359 to 360, Ser378, Ala396, and Arg413; that span reads NY.

In the N-terminal section; belongs to the N-acetylglucosamine-1-phosphate uridyltransferase family. The protein in the C-terminal section; belongs to the transferase hexapeptide repeat family. Homotrimer. Mg(2+) is required as a cofactor.

The protein resides in the cytoplasm. The enzyme catalyses alpha-D-glucosamine 1-phosphate + acetyl-CoA = N-acetyl-alpha-D-glucosamine 1-phosphate + CoA + H(+). The catalysed reaction is N-acetyl-alpha-D-glucosamine 1-phosphate + UTP + H(+) = UDP-N-acetyl-alpha-D-glucosamine + diphosphate. It participates in nucleotide-sugar biosynthesis; UDP-N-acetyl-alpha-D-glucosamine biosynthesis; N-acetyl-alpha-D-glucosamine 1-phosphate from alpha-D-glucosamine 6-phosphate (route II): step 2/2. Its pathway is nucleotide-sugar biosynthesis; UDP-N-acetyl-alpha-D-glucosamine biosynthesis; UDP-N-acetyl-alpha-D-glucosamine from N-acetyl-alpha-D-glucosamine 1-phosphate: step 1/1. The protein operates within bacterial outer membrane biogenesis; LPS lipid A biosynthesis. In terms of biological role, catalyzes the last two sequential reactions in the de novo biosynthetic pathway for UDP-N-acetylglucosamine (UDP-GlcNAc). The C-terminal domain catalyzes the transfer of acetyl group from acetyl coenzyme A to glucosamine-1-phosphate (GlcN-1-P) to produce N-acetylglucosamine-1-phosphate (GlcNAc-1-P), which is converted into UDP-GlcNAc by the transfer of uridine 5-monophosphate (from uridine 5-triphosphate), a reaction catalyzed by the N-terminal domain. The sequence is that of Bifunctional protein GlmU from Nitratiruptor sp. (strain SB155-2).